Consider the following 185-residue polypeptide: Protein OPG161 (185 aa).

The Intravirion segment spans residues M1 to I33. The chain crosses the membrane as a helical span at residues G34–I56. Over V57–N185 the chain is Virion surface. The tract at residues E98 to N185 is C-type lectin-like domain. 2 N-linked (GlcNAc...) asparagine; by host glycosylation sites follow: N125 and N135.

Belongs to the orthopoxvirus OPG161 family. As to quaternary structure, homodimer, disulfide-linked. Interacts with protein OPG190. Interacts (via C-terminus) with protein OPG164. Interacts with OPG162.

It is found in the virion membrane. Its subcellular location is the host membrane. Forms a complex with OPG162 and OPG190 to coordinate the incorporation of OPG164 into wrapped enveloped virion (EV) membranes and, subsequently, the production of actin tails. Therefore plays an essential role in efficient cell-to-cell spread of viral particles. This chain is Protein OPG161 (OPG161), found in Homo sapiens (Human).